The primary structure comprises 391 residues: 12-oxophytodienoate reductase 3 (391 aa).

M1 bears the N-acetylmethionine mark. T2 carries the post-translational modification N-acetylthreonine; in 12-oxophytodienoate reductase 3, N-terminally processed. Residues P31–T33, G64, and Q106 each bind FMN. H186 is a substrate binding site. The Proton donor role is filled by Y191. Residue R238 participates in FMN binding. R284 is a substrate binding site. Residues S320 to G322 and G343 to R344 contribute to the FMN site. The Microbody targeting signal motif lies at S389–L391.

This sequence belongs to the NADH:flavin oxidoreductase/NADH oxidase family. FMN serves as cofactor. As to expression, expressed in green seedling, leaves, flowers (anthers, pistil, petal and stamen), and to a lower extent in roots and siliques. Specifically expressed in filament during anther dehiscence initiation.

It localises to the peroxisome. It catalyses the reaction (1S,2S)-OPC-8 + NADP(+) = (9S,13S,15Z)-12-oxophyto-10,15-dienoate + NADPH + H(+). The protein operates within lipid metabolism; oxylipin biosynthesis. Its function is as follows. Specifically cleaves olefinic bonds in cyclic enones. Involved in the biosynthesis of jasmonic acid (JA) and perhaps in biosynthesis or metabolism of other oxylipin signaling moleclules. Required for the spatial and temporal regulation of JA levels during dehiscence of anthers, promoting the stomium degeneration program. In vitro, reduces 9S,13S-12-oxophytodienoic acid (9S,13S-OPDA) and 9R,13R-OPDA to 9S,13S-OPC-8:0 and 9R,13R-OPC-8:0, respectively. Can detoxify the explosive 2,4,6-trinitrotoluene (TNT) in vitro by catalyzing its nitroreduction to form hydroxylamino-dinitrotoluene (HADNT). The chain is 12-oxophytodienoate reductase 3 from Arabidopsis thaliana (Mouse-ear cress).